A 209-amino-acid polypeptide reads, in one-letter code: D-aminoacyl-tRNA deacylase 1 (209 aa).

Positions 4, 6, and 28 each coordinate Mg(2+). The Gly-cisPro motif, important for rejection of L-amino acids motif lies at 139-140 (GP). Residues 142–209 (TIELESPAPG…EGDVSSEREP (68 aa)) are disordered. 2 stretches are compositionally biased toward basic and acidic residues: residues 159–170 (QLSKLEKQQQRK) and 181–194 (SSKE…EDRS). 3 positions are modified to phosphoserine: Ser197, Ser204, and Ser205.

This sequence belongs to the DTD family. As to quaternary structure, homodimer. Interacts with CDC45 and TOPBP1. In terms of processing, preferentially phosphorylated in cells arrested early in S phase. Phosphorylation in the C-terminus weakens the interaction with CDC45. As to expression, expressed in many adult and fetal tissues. Highest levels in testis, ovary, spleen and in adult and fetal brain.

It localises to the nucleus. The protein localises to the cytoplasm. The enzyme catalyses glycyl-tRNA(Ala) + H2O = tRNA(Ala) + glycine + H(+). It catalyses the reaction a D-aminoacyl-tRNA + H2O = a tRNA + a D-alpha-amino acid + H(+). Possible ATPase involved in DNA replication, may facilitate loading of CDC45 onto pre-replication complexes. In terms of biological role, an aminoacyl-tRNA editing enzyme that deacylates mischarged D-aminoacyl-tRNAs. Also deacylates mischarged glycyl-tRNA(Ala), protecting cells against glycine mischarging by AlaRS. Acts via tRNA-based rather than protein-based catalysis; rejects L-amino acids rather than detecting D-amino acids in the active site. By recycling D-aminoacyl-tRNA to D-amino acids and free tRNA molecules, this enzyme counteracts the toxicity associated with the formation of D-aminoacyl-tRNA entities in vivo and helps enforce protein L-homochirality. This is D-aminoacyl-tRNA deacylase 1 (DTD1) from Homo sapiens (Human).